Reading from the N-terminus, the 152-residue chain is UPF0266 membrane protein YobD (152 aa).

3 helical membrane passes run Leu-6–Met-26, Val-45–His-65, and Ala-67–Ile-87.

The protein belongs to the UPF0266 family.

Its subcellular location is the cell inner membrane. In Salmonella agona (strain SL483), this protein is UPF0266 membrane protein YobD.